A 136-amino-acid chain; its full sequence is Transcription antitermination protein NusB (136 aa).

It belongs to the NusB family.

Functionally, involved in transcription antitermination. Required for transcription of ribosomal RNA (rRNA) genes. Binds specifically to the boxA antiterminator sequence of the ribosomal RNA (rrn) operons. The chain is Transcription antitermination protein NusB from Paenarthrobacter aurescens (strain TC1).